A 189-amino-acid chain; its full sequence is GTP cyclohydrolase 1 (189 aa).

Positions 79, 82, and 150 each coordinate Zn(2+).

It belongs to the GTP cyclohydrolase I family. As to quaternary structure, homomer.

The enzyme catalyses GTP + H2O = 7,8-dihydroneopterin 3'-triphosphate + formate + H(+). It participates in cofactor biosynthesis; 7,8-dihydroneopterin triphosphate biosynthesis; 7,8-dihydroneopterin triphosphate from GTP: step 1/1. This Rickettsia peacockii (strain Rustic) protein is GTP cyclohydrolase 1.